A 242-amino-acid polypeptide reads, in one-letter code: NADH-quinone oxidoreductase subunit C (242 aa).

Residues 67–101 (VVNSVGLGHKEQGAKPITNRRTTSDNVGESKSIDY) form an insert region.

Belongs to the complex I 30 kDa subunit family. NDH-1 is composed of 14 different subunits. Subunits NuoB, C, D, E, F, and G constitute the peripheral sector of the complex.

It is found in the cell inner membrane. The enzyme catalyses a quinone + NADH + 5 H(+)(in) = a quinol + NAD(+) + 4 H(+)(out). NDH-1 shuttles electrons from NADH, via FMN and iron-sulfur (Fe-S) centers, to quinones in the respiratory chain. The immediate electron acceptor for the enzyme in this species is believed to be ubiquinone. Couples the redox reaction to proton translocation (for every two electrons transferred, four hydrogen ions are translocated across the cytoplasmic membrane), and thus conserves the redox energy in a proton gradient. This is NADH-quinone oxidoreductase subunit C from Rickettsia conorii (strain ATCC VR-613 / Malish 7).